The primary structure comprises 229 residues: ABC transporter I family member 1 (229 aa).

In terms of domain architecture, ABC transporter spans 11-228 (LLLQNVSCMR…LIDMLDRADI (218 aa)). 43–50 (GTNGSGKS) is a binding site for ATP.

Belongs to the ABC transporter superfamily. ABCI family.

It is found in the membrane. It catalyses the reaction heme b(in) + ATP + H2O = heme b(out) + ADP + phosphate + H(+). Part of the ABC transporter complex CcmAB involved in the biogenesis of c-type cytochromes; once thought to export heme, this seems not to be the case, but its exact role is uncertain. Responsible for energy coupling to the transport system. This chain is ABC transporter I family member 1 (ABCI1), found in Arabidopsis thaliana (Mouse-ear cress).